We begin with the raw amino-acid sequence, 86 residues long: Small ribosomal subunit protein bS20 (86 aa).

Belongs to the bacterial ribosomal protein bS20 family.

Functionally, binds directly to 16S ribosomal RNA. In Paenarthrobacter aurescens (strain TC1), this protein is Small ribosomal subunit protein bS20.